A 328-amino-acid chain; its full sequence is 5,10-methylenetetrahydromethanopterin reductase (328 aa).

The protein belongs to the mer family.

The protein localises to the cytoplasm. The enzyme catalyses 5-methyl-5,6,7,8-tetrahydromethanopterin + oxidized coenzyme F420-(gamma-L-Glu)(n) + H(+) = 5,10-methylenetetrahydromethanopterin + reduced coenzyme F420-(gamma-L-Glu)(n). It functions in the pathway one-carbon metabolism; methanogenesis from CO(2); methyl-coenzyme M from 5,10-methylene-5,6,7,8-tetrahydromethanopterin: step 1/2. In terms of biological role, catalyzes the reversible reduction of methylene-H(4)MPT to methyl-H(4)MPT. This Methanosarcina mazei (strain ATCC BAA-159 / DSM 3647 / Goe1 / Go1 / JCM 11833 / OCM 88) (Methanosarcina frisia) protein is 5,10-methylenetetrahydromethanopterin reductase.